A 449-amino-acid chain; its full sequence is Tryptophan--tRNA ligase (449 aa).

ATP-binding positions include 10 to 12 (TTT) and 18 to 19 (GN). Positions 11 to 19 (TTGTPHLGN) match the 'HIGH' region motif. D143 contacts L-tryptophan. ATP is bound by residues 155–157 (GRD), L197, and 204–208 (KMSKS). The 'KMSKS' region motif lies at 204-208 (KMSKS).

It belongs to the class-I aminoacyl-tRNA synthetase family. In terms of assembly, homodimer.

It is found in the cytoplasm. The enzyme catalyses tRNA(Trp) + L-tryptophan + ATP = L-tryptophyl-tRNA(Trp) + AMP + diphosphate + H(+). Catalyzes the attachment of tryptophan to tRNA(Trp). The chain is Tryptophan--tRNA ligase from Pseudomonas putida (strain ATCC 47054 / DSM 6125 / CFBP 8728 / NCIMB 11950 / KT2440).